A 245-amino-acid chain; its full sequence is Short-chain dehydrogenase/reductase pyiH (245 aa).

NADP(+) is bound by residues I18, R42, D68, and N95. The active-site Proton donor is the S150.

Belongs to the short-chain dehydrogenases/reductases (SDR) family.

It participates in mycotoxin biosynthesis. Short-chain dehydrogenase/reductase; part of the gene cluster that mediates the biosynthesis of the mycotoxin pyrichalasin H, a tyrosine-derived cytochalasan that inhibits the growth of rice seedlings, but also inhibits lymphocyte capping and actin polymerization and alters cell morphology. Pyrichalasin H is indicated as the responsible agent for the genus-specific pathogenicity of M.grisea toward crabgrass. The first step in the pathway is catalyzed by the O-methyltransferase pyiA which methylates free tyrosine to generate the precursor O-methyltyrosine. The hybrid PKS-NRPS pyiS, assisted by the enoyl reductase pyiC, are responsible for fusion of the O-methyltyrosine precursor and the polyketide backbone. The polyketide synthase module (PKS) of pyiS is responsible for the synthesis of the polyketide backbone and the downstream nonribosomal peptide synthetase (NRPS) amidates the carboxyl end of the polyketide with the O-methyltyrosine precursor. As the NRPS A-domain demonstrates substrate tolerance, pyiS can also use phenylalanine, tyrosine and even para-chlorophenylalanine as amino acid precursor, which leads to the production of novel cytochalasans, including halogenated cytochalasans. Because pyiS lacks a designated enoylreductase (ER) domain, the required activity is provided the enoyl reductase pyiC. Reduction by the hydrolyase pyiE leads to 1,5-dihydropyrrolone, which is substrate for dehydration and intra-molecular Diels-Alder cyclization by the Diels-Alderase pyiF to yield the required isoindolone-fused macrocycle. The tailoring cytochrome P450 monooxygenases piyD and piyG catalyze the hydroxylation at C-18 and C-7, respectivily, whereas the short-chain dehydrogenase/reductase pyiH reduces the carbonyl at C-21 in preparation for the transfer of an acetyl group by the acetyltransferase pyiB. These 3 reactions whose order is not clear yet, lead to the production of O-methylpyrichalasin J, a deacetylated pyrichalasin H. Finally, pyiB to converts O-methylpyrichalasin J into the final product pyrichalasin H via acetylation of C-21. This Pyricularia grisea (Crabgrass-specific blast fungus) protein is Short-chain dehydrogenase/reductase pyiH.